The following is a 427-amino-acid chain: Phosphatidylglycerol--prolipoprotein diacylglyceryl transferase (427 aa).

4 helical membrane passes run 21 to 41, 53 to 73, 96 to 116, and 122 to 142; these read VPIR…LLIG, GVIY…GRLY, IWDG…GAWI, and GIPL…AQAI. Arginine 144 is a binding site for a 1,2-diacyl-sn-glycero-3-phospho-(1'-sn-glycerol). The next 2 membrane-spanning stretches (helical) occupy residues 189-209 and 256-276; these read VALV…LIFV and INSF…MAAP. Positions 280–427 are disordered; sequence EDPESLRGNQ…ARLRERLSGR (148 aa). Residues 299–330 show a composition bias toward low complexity; that stretch reads EPATVAATTEAATEGVAAPADGAEAAGADATA. Residues 332-346 show a composition bias toward basic and acidic residues; that stretch reads RPEESAEPDVEKPES. Residues 347–404 show a composition bias toward acidic residues; that stretch reads EETEAAEEASEPEAEEPEAPEAEEPEEPETEEPEADSGEEPEEESGEAPEQLVAEEPE. The segment covering 411-427 has biased composition (basic and acidic residues); it reads ETKRRWGARLRERLSGR.

This sequence belongs to the Lgt family.

The protein localises to the cell membrane. The catalysed reaction is L-cysteinyl-[prolipoprotein] + a 1,2-diacyl-sn-glycero-3-phospho-(1'-sn-glycerol) = an S-1,2-diacyl-sn-glyceryl-L-cysteinyl-[prolipoprotein] + sn-glycerol 1-phosphate + H(+). It participates in protein modification; lipoprotein biosynthesis (diacylglyceryl transfer). Its function is as follows. Catalyzes the transfer of the diacylglyceryl group from phosphatidylglycerol to the sulfhydryl group of the N-terminal cysteine of a prolipoprotein, the first step in the formation of mature lipoproteins. The polypeptide is Phosphatidylglycerol--prolipoprotein diacylglyceryl transferase (Mycolicibacterium paratuberculosis (strain ATCC BAA-968 / K-10) (Mycobacterium paratuberculosis)).